The following is a 388-amino-acid chain: LL-diaminopimelate aminotransferase (388 aa).

2 residues coordinate substrate: Tyr-15 and Gly-40. Pyridoxal 5'-phosphate-binding positions include Tyr-69, 103-104 (SK), Tyr-128, Asn-178, Tyr-209, and 237-239 (SLS). Residues Lys-104, Tyr-128, and Asn-178 each contribute to the substrate site. Position 240 is an N6-(pyridoxal phosphate)lysine (Lys-240). Arg-248 is a binding site for pyridoxal 5'-phosphate. Residue Arg-366 coordinates substrate.

It belongs to the class-I pyridoxal-phosphate-dependent aminotransferase family. LL-diaminopimelate aminotransferase subfamily. As to quaternary structure, homodimer. Pyridoxal 5'-phosphate serves as cofactor.

The catalysed reaction is (2S,6S)-2,6-diaminopimelate + 2-oxoglutarate = (S)-2,3,4,5-tetrahydrodipicolinate + L-glutamate + H2O + H(+). It functions in the pathway amino-acid biosynthesis; L-lysine biosynthesis via DAP pathway; LL-2,6-diaminopimelate from (S)-tetrahydrodipicolinate (aminotransferase route): step 1/1. In terms of biological role, involved in the synthesis of meso-diaminopimelate (m-DAP or DL-DAP), required for both lysine and peptidoglycan biosynthesis. Catalyzes the direct conversion of tetrahydrodipicolinate to LL-diaminopimelate. Can also use m-DAP instead of LL-DAP as the amino-group donor. The chain is LL-diaminopimelate aminotransferase from Syntrophobacter fumaroxidans (strain DSM 10017 / MPOB).